The sequence spans 228 residues: uncharacterized protein (228 aa).

This is an uncharacterized protein from Archaeoglobus fulgidus (strain ATCC 49558 / DSM 4304 / JCM 9628 / NBRC 100126 / VC-16).